We begin with the raw amino-acid sequence, 143 residues long: Auxin-responsive protein SAUR67 (143 aa).

Belongs to the ARG7 family.

It localises to the cell membrane. In terms of biological role, may promote auxin-stimulated organ elongation, such as hypocotyls, stamen filaments and petals. This chain is Auxin-responsive protein SAUR67, found in Arabidopsis thaliana (Mouse-ear cress).